The sequence spans 419 residues: Cytosine permease (419 aa).

Residues 1–19 (MSQDNNFSQGPVPQSARKG) are Cytoplasmic-facing. A helical transmembrane segment spans residues 20–39 (VLALTFVMLGLTFFSASMWT). Residues 40–51 (GGTLGTGLSYHD) lie on the Periplasmic side of the membrane. Residues 52–71 (FFLAVLIGNLLLGIYTSFLG) traverse the membrane as a helical segment. At 72 to 100 (YIGAKTGLTTHLLARFSFGVKGSWLPSLL) the chain is on the cytoplasmic side. The helical transmembrane segment at 101-120 (LGGTQVGWFGVGVAMFAIPV) threads the bilayer. Residues 121–127 (GKATGLD) are Periplasmic-facing. The chain crosses the membrane as a helical span at residues 128–147 (INLLIAVSGLLMTVTVFFGI). Over 148 to 152 (SALTV) the chain is Cytoplasmic. A helical transmembrane segment spans residues 153–172 (LSVIAVPAIACLGGYSVWLA). Over 173–192 (VNGMGGLDALKAVVPAQPLD) the chain is Periplasmic. A helical transmembrane segment spans residues 193–212 (FNVALALVVGSFISAGTLTA). Topologically, residues 213-221 (DFVRFGRNA) are cytoplasmic. A helical membrane pass occupies residues 222-242 (KLAVLVAMVAFFLGNSLMFIF). At 243–257 (GAAGAAALGMADISD) the chain is on the periplasmic side. A helical membrane pass occupies residues 258–277 (VMIAQGLLLPAIVVLGLNIW). The Cytoplasmic portion of the chain corresponds to 278-300 (TTNDNALYASGLGFANITGMSSK). The helical transmembrane segment at 301 to 320 (TLSVINGIIGTVCALWLYNN) threads the bilayer. A topological domain (periplasmic) is located at residue phenylalanine 321. Residues 322-341 (VGWLTFLSAAIPPVGGVIIA) form a helical membrane-spanning segment. The Cytoplasmic portion of the chain corresponds to 342-358 (DYLMNRRRYEHFATTRM). A helical membrane pass occupies residues 359 to 378 (MSVNWVAILAVALGIAAGHW). Over 379-380 (LP) the chain is Periplasmic. A helical transmembrane segment spans residues 381–400 (GIVPVNAVLGGALSYLILNP). The Cytoplasmic portion of the chain corresponds to 401 to 419 (ILNRKTTAAMTHVEANSVE).

It belongs to the purine-cytosine permease (2.A.39) family.

The protein resides in the cell inner membrane. Functionally, required for cytosine transport into the cell. This is Cytosine permease (codB) from Escherichia coli O6:H1 (strain CFT073 / ATCC 700928 / UPEC).